The primary structure comprises 461 residues: Argininosuccinate lyase (461 aa).

This sequence belongs to the lyase 1 family. Argininosuccinate lyase subfamily.

Its subcellular location is the cytoplasm. It catalyses the reaction 2-(N(omega)-L-arginino)succinate = fumarate + L-arginine. The protein operates within amino-acid biosynthesis; L-arginine biosynthesis; L-arginine from L-ornithine and carbamoyl phosphate: step 3/3. This is Argininosuccinate lyase from Chlorobium chlorochromatii (strain CaD3).